The chain runs to 281 residues: MEQQLNLGHLLTAARLLDIGALDISSLDLGALTSTSSSPGSSSPAMFDLSNESELRSLFCGKLKVDKKQSSCASNASTSSQPYCSSPPARKSSKHSRTAHNELEKTRRANLRGCLETLKMLVPCVSDATRNTTLALLTRARDHIIELQDSNAAQMKKLNDLRDEQDELVAELAQLQADEEVAQATSQACQTLSQSRPESRASSFTSTSSRDSPCYLEYSPSSKPMDSHKPTIIDLYAEGLIPRGPITFPRPLVYPHNVFDLMNLPPTPFDVSQFLPINLQV.

The span at 71-80 (SCASNASTSS) shows a compositional bias: low complexity. The segment at 71–105 (SCASNASTSSQPYCSSPPARKSSKHSRTAHNELEK) is disordered. The interval 95–108 (HSRTAHNELEKTRR) is basic motif. One can recognise a bHLH domain in the interval 95 to 147 (HSRTAHNELEKTRRANLRGCLETLKMLVPCVSDATRNTTLALLTRARDHIIEL). The segment at 109–147 (ANLRGCLETLKMLVPCVSDATRNTTLALLTRARDHIIEL) is helix-loop-helix motif. Residues 144–185 (IIELQDSNAAQMKKLNDLRDEQDELVAELAQLQADEEVAQAT) adopt a coiled-coil conformation. A disordered region spans residues 189–213 (CQTLSQSRPESRASSFTSTSSRDSP). Residues 200–212 (RASSFTSTSSRDS) show a composition bias toward low complexity.

Forms heterodimer with mxl-1 in the presence and absence of DNA. Ubiquitinated. In terms of tissue distribution, expressed in intestinal cells in adults. Expressed in D-type motor neuron cell bodies.

It is found in the nucleus. In terms of biological role, transcriptional regulator which binds to the E box motif 5'-CACGTG-3', when in a heterodimeric complex with mxl-1. Involved in the control of lifespan in response to dietary restriction, the decline in protein homeostasis associated with normal aging, germline signaling and may overlap with the insulin-like signaling pathway. Plays a role in autophagy. Involved in promoting infection by the microsporidian pathogen N.parisii, possibly together with transcription factors pha-4 and zip-10. In response to neuronal injury, mdl-1 is targeted by sdz-33 for ubiquitin-mediated degradation, probably thereby reducing levels of mdl-1-mxl-1 heterodimers, allowing free mxl-1 to form complexes with tdpt-1 and thus inhibiting tdpt-1-dependent sumoylation of ets-4. The polypeptide is Mad-like protein 1 (Caenorhabditis elegans).